A 366-amino-acid chain; its full sequence is Nucleoporin SEH1 (366 aa).

WD repeat units lie at residues 18–57 (AHRD…NWRR), 63–104 (CHGG…TEKD), 111–152 (QWIR…RIYE), 161–209 (RWNL…VIYE), 226–267 (DMPC…TAIL), and 290–329 (GDQR…QWVK).

The protein belongs to the WD repeat SEC13 family. Component of the nuclear pore complex (NPC). Probably part of the GATOR complex.

It localises to the nucleus. The protein resides in the nuclear pore complex. It is found in the lysosome membrane. Probable component of the nuclear pore complex (NPC) which is involved in the trafficking of macromolecules between the cytoplasm and nucleus. Functionally, as a component of the GATOR complex may function in the amino acid-sensing branch of the TORC1 signaling pathway. The polypeptide is Nucleoporin SEH1 (Caenorhabditis briggsae).